The following is a 508-amino-acid chain: Drug efflux pump JefA (508 aa).

Transmembrane regions (helical) follow at residues 9 to 29, 46 to 66, 75 to 95, 104 to 124, 136 to 156, 163 to 183, 194 to 214, 222 to 242, 265 to 285, 297 to 317, 328 to 348, 354 to 374, 399 to 419, and 479 to 499; these read VLATGLGIFMVFVDVNIVNVA, WAVAGYSLGMAAVLMSCALLG, FVFGVTLFVVSSIVCVLPVSL, IQGLGAAFISVLSLALLSHSF, NWMAIGMVGAASAPALGGLMV, SVFLVNVPLGAIVWLLTLVGV, LDWVGQLTLIPAVALIAYTII, QSAGFVAALLLAAGVLLWLFV, SVLIVYFVVMSCFFGTLMVIT, LHAGLMMLPVPAGFGVASLLA, LPVLTCLAAMFIGLAIFAISM, VALVGLTIFGAGAGGCATPLL, LGGIFGVAFLGTIVAAWLGAA, and GIKLALGGAAVLLTGAFVLGW.

The protein belongs to the major facilitator superfamily.

The protein localises to the cell inner membrane. Its function is as follows. Involved in resistance to ethambutol and isoniazid. The chain is Drug efflux pump JefA from Mycobacterium tuberculosis (strain CDC 1551 / Oshkosh).